A 138-amino-acid chain; its full sequence is uncharacterized protein (138 aa).

This is an uncharacterized protein from Homo sapiens (Human).